We begin with the raw amino-acid sequence, 84 residues long: Toxin Acra3 (84 aa).

The first 17 residues, 1–17 (MKIIFLVLMMILSEVYS), serve as a signal peptide directing secretion. The 64-residue stretch at 19-82 (RDGYPVHDGT…VYGDDGIFCK (64 aa)) folds into the LCN-type CS-alpha/beta domain. Disulfide bonds link Cys-30–Cys-81, Cys-34–Cys-57, Cys-43–Cys-62, and Cys-47–Cys-64. At Ser-83 the chain carries Serine amide.

Belongs to the long (4 C-C) scorpion toxin superfamily. Sodium channel inhibitor family. Beta subfamily. As to expression, expressed by the venom gland.

Its subcellular location is the secreted. Functionally, toxin with unknown target. In vivo, induces severe neurotoxic events in mice such as excitability and convulsions, leading to the death of the animals within a few minutes after injection. Exerts very strong cytotoxic effect on a mouse brain tumor cell line (BC3H1) (IC(50)=5 mg/ml). It exerts its effects by inducing a stronger necrosis than apoptosis in BC3H1 cells. The chain is Toxin Acra3 from Androctonus crassicauda (Arabian fat-tailed scorpion).